Reading from the N-terminus, the 619-residue chain is Manganese lipoxygenase (619 aa).

An N-terminal signal peptide occupies residues 1-16 (MRVLVWIAGLAPLAVA). Asparagine 32, asparagine 42, asparagine 62, asparagine 86, asparagine 164, and asparagine 229 each carry an N-linked (GlcNAc...) asparagine glycan. The 565-residue stretch at 55–619 (TLPCEDGNST…PGNIPFYLSV (565 aa)) folds into the Lipoxygenase domain. Positions 298, 303, 483, and 487 each coordinate Mn(2+). 2 N-linked (GlcNAc...) asparagine glycosylation sites follow: asparagine 515 and asparagine 549. Valine 619 is a binding site for Mn(2+).

It belongs to the lipoxygenase family. Manganese lipoxygenase subfamily. Mn(2+) is required as a cofactor.

Its subcellular location is the secreted. The catalysed reaction is (9Z,12Z)-octadecadienoate + O2 = (9S)-hydroperoxy-(10E,12Z)-octadecadienoate. It carries out the reaction (9Z,12Z)-octadecadienoate + O2 = (11S)-hydroperoxy-(9Z,12Z)-octadecadienoate. The enzyme catalyses (9Z,12Z)-octadecadienoate + O2 = (13R)-hydroperoxy-(9Z,11E)-octadecadienoate. It catalyses the reaction (9Z,12Z,15Z)-octadecatrienoate + O2 = (9S)-hydroperoxy-(10E,12Z,15Z)-octadecatrienoate. The catalysed reaction is (9Z,12Z,15Z)-octadecatrienoate + O2 = (11R)-hydroperoxy-(9Z,12Z,15Z)-octadecatrienoate. It carries out the reaction (9Z,12Z,15Z)-octadecatrienoate + O2 = (13R)-hydroperoxy-(9Z,11E,15Z)-octadecatrienoate. The enzyme catalyses (9S)-hydroperoxy-(10E,12Z,15Z)-octadecatrienoate + O2 = (9S,16S)-dihydroperoxy-(10E,12Z,14E)-octadecatrienoate. In terms of biological role, lipoxygenase that metabolizes linoleic and alpha-linolenic acids to 9S-, 11- and 13R-hydroperoxy fatty acids. At the end of lipoxygenation, the intermediate product 11S-HPODE from linoleic acid is then transformed into 9S-HPODE and 13R-HPODE as the final products. The intermediate product 11R-HPOTrE from alpha-linolenic acid is transformed into 9S-HPOTrE and 13R-HPOTrE as the final products. 9S-HPOTrE is further oxidized by the enzyme to 9S,16S-DiHPOTrE as the end product. This Pyricularia oryzae (strain 70-15 / ATCC MYA-4617 / FGSC 8958) (Rice blast fungus) protein is Manganese lipoxygenase.